Here is a 185-residue protein sequence, read N- to C-terminus: Elongation factor P (185 aa).

It belongs to the elongation factor P family.

It is found in the cytoplasm. It participates in protein biosynthesis; polypeptide chain elongation. In terms of biological role, involved in peptide bond synthesis. Stimulates efficient translation and peptide-bond synthesis on native or reconstituted 70S ribosomes in vitro. Probably functions indirectly by altering the affinity of the ribosome for aminoacyl-tRNA, thus increasing their reactivity as acceptors for peptidyl transferase. The chain is Elongation factor P from Bacillus anthracis (strain CDC 684 / NRRL 3495).